The following is a 61-amino-acid chain: N-acetyl-D-glucosamine kinase (61 aa).

Tyr30 carries the post-translational modification Phosphotyrosine. Ser45 contributes to the ATP binding site.

Belongs to the eukaryotic-type N-acetylglucosamine kinase family. In terms of assembly, homodimer.

It catalyses the reaction N-acetyl-D-glucosamine + ATP = N-acetyl-D-glucosamine 6-phosphate + ADP + H(+). It carries out the reaction aldehydo-N-acetyl-D-mannosamine + ATP = aldehydo-N-acetyl-D-mannosamine 6-phosphate + ADP + H(+). The enzyme catalyses N-acetyl-D-muramoyl-L-alanyl-D-isoglutamine + ATP = 6-O-phospho-N-acetyl-D-muramoyl-L-alanyl-D-isoglutamine + ADP + H(+). The protein operates within amino-sugar metabolism; N-acetylneuraminate degradation. Its function is as follows. Converts endogenous N-acetylglucosamine (GlcNAc), a major component of complex carbohydrates, from lysosomal degradation or nutritional sources into GlcNAc 6-phosphate. Also has N-acetylmannosamine (ManNAc) kinase activity. Involved in the N-glycolylneuraminic acid (Neu5Gc) degradation pathway. Also involved in innate immunity by promoting detection of bacterial peptidoglycan by NOD2: acts by catalyzing phosphorylation of muramyl dipeptide (MDP), a fragment of bacterial peptidoglycan, to generate 6-O-phospho-muramyl dipeptide, which acts as a direct ligand for NOD2. The chain is N-acetyl-D-glucosamine kinase from Mesocricetus auratus (Golden hamster).